We begin with the raw amino-acid sequence, 234 residues long: Orotidine 5'-phosphate decarboxylase (234 aa).

Substrate contacts are provided by residues Asp-10, Lys-31, 58–67 (DLKLHDIPNT), Thr-121, Arg-183, Gln-192, Gly-212, and Arg-213. Lys-60 functions as the Proton donor in the catalytic mechanism.

It belongs to the OMP decarboxylase family. Type 1 subfamily. As to quaternary structure, homodimer.

It carries out the reaction orotidine 5'-phosphate + H(+) = UMP + CO2. The protein operates within pyrimidine metabolism; UMP biosynthesis via de novo pathway; UMP from orotate: step 2/2. Its function is as follows. Catalyzes the decarboxylation of orotidine 5'-monophosphate (OMP) to uridine 5'-monophosphate (UMP). This chain is Orotidine 5'-phosphate decarboxylase, found in Halalkalibacterium halodurans (strain ATCC BAA-125 / DSM 18197 / FERM 7344 / JCM 9153 / C-125) (Bacillus halodurans).